Here is a 443-residue protein sequence, read N- to C-terminus: Gasdermin-A2 (443 aa).

The triggers pyroptosis stretch occupies residues 1–249; sequence MSMFEDVTRA…QGSTVQMISG (249 aa). 9 to 13 is an a cardiolipin binding site; it reads RALAR. The next 4 beta stranded transmembrane spans lie at 78 to 95, 99 to 120, 164 to 179, and 183 to 197; these read NFSF…DVEV, MKVK…MLSV, VTLK…FSLN, and LGLQ…AVTI. A coiled-coil region spans residues 249 to 312; sequence GEMHEDFKTL…GALDKGHEVT (64 aa).

Belongs to the gasdermin family. In terms of assembly, homooligomer; homooligomeric ring-shaped pore complex containing 18-36 subunits when inserted in the membrane. In terms of processing, cleavage relieves autoinhibition by releasing the N-terminal moiety (Gasdermin-A2, N-terminal) that initiates pyroptosis. In contrast to Gsdma, not cleaved by bacterial effector protein SpeB. Palmitoylated. In terms of tissue distribution, expressed in the gastrointestinal tract, specifically from the middle to the upper region of the gastric mucosa in the glandular stomach.

It is found in the cytoplasm. The protein resides in the perinuclear region. The protein localises to the cytosol. It localises to the cell membrane. The full-length protein before cleavage is inactive: intramolecular interactions between N- and C-terminal domains mediate autoinhibition in the absence of activation signal. The intrinsic pyroptosis-inducing activity is carried by the released N-terminal moiety (Gasdermin-A2, N-terminal). In terms of biological role, this form constitutes the precursor of the pore-forming protein and acts as a sensor of infection: upon bacterial infection, specifically cleaved by some bacterial effector protein, releasing the N-terminal moiety (Gasdermin-A2, N-terminal) that binds to membranes and forms pores, triggering pyroptosis. Pore-forming protein that causes membrane permeabilization and pyroptosis. Released upon cleavage of Gasdermin-A2, and binds to membrane inner leaflet lipids. Homooligomerizes within the membrane and forms pores of 10-15 nanometers (nm) of inner diameter, triggering pyroptosis. Binds to membrane inner leaflet lipids, such as phosphatidylinositol (4,5)-bisphosphate. The chain is Gasdermin-A2 from Mus musculus (Mouse).